We begin with the raw amino-acid sequence, 962 residues long: MSEELLSTRPSKRDYNDIEEPEDSHVTVHSVEQDSQHSGEESSTVDALQETEGDVDVIGEDEDEHDIPVMPTVTSSGEVLDESQVTPTKQASSSQPREEIIHGKGESVYSSFPCQVIPETLSRMTRTPPDGEHLEVYRMSNGRLRIYVVDHFKKFSPYSNLTHKPCTVCNRVMKSGEMHLNFPADLDRRRIWANLLGFKYKDILRSKMGPVSFSIAAGPICTEHFAEECFRNHNFNKSAIEAFGVPVAISPDVKTTPSKKSSRVPWVCTVCEFHSCSVVELQTHLLNHTEEMLKKKDNVLDVPEAGFMCPFCRKCTYGYKTISGYRRHLNAGPIHHCHLRRIYEFAKMNCRATELDPAESWDNWTRRNVYVAYHGCEPPANEIVLTPSPTKKAYVQNPEERTKMVHDEEKRKKAVRTLSFVGKEGGTSVNDLNVMQRQVFLQLRREAEINTKAEESAQGTKEQESSQKKHAEEESDDVSELTSHQSPQAPMGSGERRKATRLATSATNSPIKKVAKHEVPATAPSTPAKKRKISHEEEHDPTPESVEREPTVSPNDPRERLRLKERDEQFAKMVQKRSQQVKRLINAKQFKKQEAATKKPRKALAYNLAKGIAATSSTEPEDKVTSSEQTPEPTTSQKFIARNTRSKTKESAVQKVEKPATPVAKPAPVEKEPEERPLKSMLARSFVAGVRPSMAKYQIPLESFTATASLGGGRSLSSGVISRPPTSSSPGGIFSQRVMGAVAQEKGPAKRPSVLSRRPLILSPRKKTSTPRPTLSHHESSPNFSASSPVVVSDEYLIPATDMEVEMVEEVIDSMGNSSSEDVATSSTSSERQPMLTLAEALEMDGSSGTVKDQDMEEISKEMMKDAHYYRAMEDAIKCRTVTKMRADMRLSRHCIRQIEAARARARLFGERTEDYQIFYSNDGAQVLTKKDPKWRELQQQQQQQQQQQEQFPGQGSSDSQQ.

Disordered stretches follow at residues 1-53 and 74-99; these read MSEE…ETEG and TSSG…PREE. Positions 23-40 are enriched in basic and acidic residues; sequence DSHVTVHSVEQDSQHSGE. A compositionally biased stretch (polar residues) spans 74-95; it reads TSSGEVLDESQVTPTKQASSSQ. Residues 161 to 249 form a THAP-type zinc finger; that stretch reads LTHKPCTVCN…IEAFGVPVAI (89 aa). 2 stretches are compositionally biased toward basic and acidic residues: residues 452-472 and 534-570; these read KAEE…KHAE and SHEE…DEQF. Disordered regions lie at residues 452-575, 612-676, 744-788, and 932-962; these read KAEE…KMVQ, IAAT…PEER, QEKG…SASS, and DPKW…DSQQ. Over residues 626–637 the composition is skewed to low complexity; it reads SSEQTPEPTTSQ. Residues 647–658 are compositionally biased toward basic and acidic residues; it reads KTKESAVQKVEK. The span at 939-951 shows a compositional bias: low complexity; that stretch reads QQQQQQQQQQQEQ. Residues 952 to 962 are compositionally biased toward polar residues; it reads FPGQGSSDSQQ.

As to expression, expressed in vulval precursor P(3-8).p cells and their descendants, neurons of the head, tail and ventral cord, hypodermal and intestinal cells and germline cells.

It is found in the nucleus. Required to negatively regulate vulval development. Antagonizes Ras-mediated vulval induction. Acts cell autonomously. The protein is Protein lin-36 (lin-36) of Caenorhabditis elegans.